We begin with the raw amino-acid sequence, 1010 residues long: Lysosomal alpha-mannosidase (1010 aa).

The first 22 residues, 1 to 22, serve as a signal peptide directing secretion; sequence MVIKKLFILIFCLFLIINEING. The propeptide at 23–40 is pro I; that stretch reads KKTKINDIKKSKPKLSST. Zn(2+) contacts are provided by histidine 51 and aspartate 53. N-linked (GlcNAc...) asparagine glycosylation occurs at asparagine 68. The Zn(2+) site is built by aspartate 173 and histidine 420. Residue aspartate 173 is the Nucleophile of the active site. N-linked (GlcNAc...) asparagine glycans are attached at residues asparagine 480, asparagine 520, asparagine 528, asparagine 539, asparagine 623, asparagine 760, asparagine 784, asparagine 828, asparagine 954, and asparagine 963. Positions 508–595 are cleaved as a propeptide — pro II; that stretch reads RNEPVRIPIP…GGGKINEKVS (88 aa).

It belongs to the glycosyl hydrolase 38 family. Tetramer of equimolar amounts of 60 and 58 kDa subunits. Zn(2+) is required as a cofactor. First cleaved into the mature 58 kDa subunit and an intermediate 82 kDa subunit. The latter is then cleaved to its mature 60 kDa subunit form. These events occur in multiple intracellular compartments. The 60 kDa subunit may form one or more intramolecular disulfide bonds.

The protein resides in the lysosome. It carries out the reaction Hydrolysis of terminal, non-reducing alpha-D-mannose residues in alpha-D-mannosides.. This is Lysosomal alpha-mannosidase (manA) from Dictyostelium discoideum (Social amoeba).